The chain runs to 469 residues: MKHIRTRFAPSPTGYLHIGGVRTALFSWLFARQNNGAFILRIEDTDVARSTQASVDAILEGLRWLQIDWNEGPYYQSQRMDRYREVIEQLVKSDDAYRCYCSKERLIKLRNTQLKNKQKPRYDGFCRDKAPRQSNEPFVIRFRNPVEGAVVFDDLIRGTISIDNRELDDLIIARSDGGPTYNLTVVVDDWDMKITHVIRGDDHINNTPRQINILHALGAELPHYGHVPMILGPDGKRLSKRHGAVSVLQYRDEGYLPEALMNYLIRLGWAHGDQEIFSREEMVQLFDISAVSRSPAAFNPEKLLWLNQHYLKTVSPTIIAEAFATQLEKAGTDLRNGPSLEQVIALQAERTKTLKEMAQRSLYFYQEVRSYDEKAARKHLLATIVEPLQRVRERLASLPSWEKEAIHEVIVETAQLHQLKLGQLAQPIRVALTGDTVSPPIDATLYLIGRDSALKRLDHAIRFIHQGMG.

The 'HIGH' region motif lies at P10–G20. 4 residues coordinate Zn(2+): C99, C101, C126, and D128. A 'KMSKS' region motif is present at residues R237–R241. K240 is a binding site for ATP.

This sequence belongs to the class-I aminoacyl-tRNA synthetase family. Glutamate--tRNA ligase type 1 subfamily. Monomer. The cofactor is Zn(2+).

Its subcellular location is the cytoplasm. It catalyses the reaction tRNA(Glu) + L-glutamate + ATP = L-glutamyl-tRNA(Glu) + AMP + diphosphate. Functionally, catalyzes the attachment of glutamate to tRNA(Glu) in a two-step reaction: glutamate is first activated by ATP to form Glu-AMP and then transferred to the acceptor end of tRNA(Glu). The polypeptide is Glutamate--tRNA ligase 1 (Coxiella burnetii (strain RSA 331 / Henzerling II)).